A 315-amino-acid polypeptide reads, in one-letter code: L-lactate dehydrogenase (315 aa).

Residues valine 14, aspartate 35, tyrosine 67, and 81-82 contribute to the NAD(+) site; that span reads GV. Substrate contacts are provided by residues glutamine 84, arginine 91, and 123–126; that span reads NPVD. NAD(+) is bound by residues 121-123 and serine 146; that span reads ASN. 151 to 154 serves as a coordination point for substrate; it reads DSAR. The active-site Proton acceptor is histidine 178. Residue tyrosine 219 is modified to Phosphotyrosine. Threonine 228 provides a ligand contact to substrate.

The protein belongs to the LDH/MDH superfamily. LDH family. As to quaternary structure, homotetramer.

The protein localises to the cytoplasm. The enzyme catalyses (S)-lactate + NAD(+) = pyruvate + NADH + H(+). The protein operates within fermentation; pyruvate fermentation to lactate; (S)-lactate from pyruvate: step 1/1. In terms of biological role, catalyzes the conversion of lactate to pyruvate. The protein is L-lactate dehydrogenase of Malacoplasma penetrans (strain HF-2) (Mycoplasma penetrans).